A 740-amino-acid polypeptide reads, in one-letter code: E3 ubiquitin-protein ligase DTX3L (740 aa).

N-acetylalanine is present on A2. The residue at position 9 (S9) is a Phosphoserine. 3 disordered regions span residues 96–119, 195–231, and 524–551; these read NTRP…MHQH, SEQK…KAEQ, and HETP…SEAS. 2 stretches are compositionally biased toward polar residues: residues 98-111 and 195-205; these read RPQI…QAET and SEQKQQFSPSM. A Phosphoserine modification is found at S202. Positions 206–218 are enriched in basic and acidic residues; it reads TERKPLSQQERDS. A phosphoserine mark is found at S221, S532, and S539. The RING-type zinc-finger motif lies at 561–600; the sequence is CVICMDTISNKKVLPKCKHEFCAPCINKAMSYKPICPTCQ.

This sequence belongs to the Deltex family. As to quaternary structure, homodimer and heterodimer. Can heterodimerize with DTX1, enhancing its ubiquitin ligase activity in vitro. Interacts (via N-terminus) with ADP ribosyltransferase PARP9/BAL1 (via PARP catalytic domain) forming a stable complex; the interaction is required to activate PARP9 but is dispensable for DTX3L catalytic activity. Forms a complex with STAT1 and PARP9 independently of IFNB1 or IFNG-mediated STAT1 'Tyr-701' phosphorylation. Found in a complex with PARP9, STAT1 and H2BC9. Found in a complex with E3 ligase ITCH and ESCRT-0 components HGS and STAM. Interacts (via C-terminus) with ITCH; the interaction is increased upon CXCL12 stimulation and inhibits ITCH catalytic activity; the interaction is direct. Interacts with HGS and STAM; the interaction brings together HGS and STAM and promotes their recruitment to early endosomes. In terms of assembly, (Microbial infection) Interacts with encephalomyocarditis virus (EMCV) C3 protease; the interaction results in C3 protease 'Lys-48'-linked ubiquitination. (Microbial infection) Interacts with human rhinovirus (HRV) C3 protease; the interaction results in C3 protease 'Lys-48'-linked ubiquitination. Post-translationally, autoubiquitinated.

The protein resides in the cytoplasm. Its subcellular location is the nucleus. It is found in the early endosome membrane. It localises to the lysosome membrane. The catalysed reaction is S-ubiquitinyl-[E2 ubiquitin-conjugating enzyme]-L-cysteine + [acceptor protein]-L-lysine = [E2 ubiquitin-conjugating enzyme]-L-cysteine + N(6)-ubiquitinyl-[acceptor protein]-L-lysine.. It functions in the pathway protein modification; protein ubiquitination. With respect to regulation, binding to PARP9 enhances DTX3L catalytic activity. Functionally, E3 ubiquitin-protein ligase which, in association with ADP-ribosyltransferase PARP9, plays a role in DNA damage repair and in interferon-mediated antiviral responses. Monoubiquitinates several histones, including histone H2A, H2B, H3 and H4. In response to DNA damage, mediates monoubiquitination of 'Lys-91' of histone H4 (H4K91ub1). The exact role of H4K91ub1 in DNA damage response is still unclear but it may function as a licensing signal for additional histone H4 post-translational modifications such as H4 'Lys-20' methylation (H4K20me). PARP1-dependent PARP9-DTX3L-mediated ubiquitination promotes the rapid and specific recruitment of 53BP1/TP53BP1, UIMC1/RAP80, and BRCA1 to DNA damage sites. By monoubiquitinating histone H2B H2BC9/H2BJ and thereby promoting chromatin remodeling, positively regulates STAT1-dependent interferon-stimulated gene transcription and thus STAT1-mediated control of viral replication. Independently of its catalytic activity, promotes the sorting of chemokine receptor CXCR4 from early endosome to lysosome following CXCL12 stimulation by reducing E3 ligase ITCH activity and thus ITCH-mediated ubiquitination of endosomal sorting complex required for transport ESCRT-0 components HGS and STAM. In addition, required for the recruitment of HGS and STAM to early endosomes. In association with PARP9, plays a role in antiviral responses by mediating 'Lys-48'-linked ubiquitination of encephalomyocarditis virus (EMCV) and human rhinovirus (HRV) C3 proteases and thus promoting their proteasomal-mediated degradation. The protein is E3 ubiquitin-protein ligase DTX3L (DTX3L) of Homo sapiens (Human).